Reading from the N-terminus, the 104-residue chain is Integration host factor subunit beta (104 aa).

It belongs to the bacterial histone-like protein family. In terms of assembly, heterodimer of an alpha and a beta chain.

Functionally, this protein is one of the two subunits of integration host factor, a specific DNA-binding protein that functions in genetic recombination as well as in transcriptional and translational control. The sequence is that of Integration host factor subunit beta from Chromobacterium violaceum (strain ATCC 12472 / DSM 30191 / JCM 1249 / CCUG 213 / NBRC 12614 / NCIMB 9131 / NCTC 9757 / MK).